The sequence spans 430 residues: Asparagine--tRNA ligase (430 aa).

The protein belongs to the class-II aminoacyl-tRNA synthetase family. In terms of assembly, homodimer.

The protein resides in the cytoplasm. The enzyme catalyses tRNA(Asn) + L-asparagine + ATP = L-asparaginyl-tRNA(Asn) + AMP + diphosphate + H(+). This is Asparagine--tRNA ligase from Listeria innocua serovar 6a (strain ATCC BAA-680 / CLIP 11262).